We begin with the raw amino-acid sequence, 165 residues long: Phosphopantetheine adenylyltransferase (165 aa).

Serine 10 contacts substrate. Residues 10–11 and histidine 18 each bind ATP; that span reads SF. Residues lysine 42, leucine 74, and arginine 88 each contribute to the substrate site. ATP is bound by residues 89–91, glutamate 99, and 124–130; these read GLR and WFYTSST.

Belongs to the bacterial CoaD family. In terms of assembly, homohexamer. Requires Mg(2+) as cofactor.

The protein resides in the cytoplasm. The catalysed reaction is (R)-4'-phosphopantetheine + ATP + H(+) = 3'-dephospho-CoA + diphosphate. The protein operates within cofactor biosynthesis; coenzyme A biosynthesis; CoA from (R)-pantothenate: step 4/5. Reversibly transfers an adenylyl group from ATP to 4'-phosphopantetheine, yielding dephospho-CoA (dPCoA) and pyrophosphate. The protein is Phosphopantetheine adenylyltransferase of Syntrophus aciditrophicus (strain SB).